Here is a 1052-residue protein sequence, read N- to C-terminus: Lateral signaling target protein 2 homolog (1052 aa).

5 disordered regions span residues 311–348 (YSSI…TSPH), 379–455 (PSML…DSDS), 506–539 (DEFG…STSA), 551–678 (LRLP…ASSF), and 814–973 (NTID…IPDG). Low complexity-rich tracts occupy residues 312–346 (SSIE…STTS), 379–392 (PSML…TPTA), and 400–419 (PSHS…NPPA). Residues 422 to 455 (SEDDDDDDEEREDDEEECGMLDSDEQDLNDDSDS) are compositionally biased toward acidic residues. The segment covering 554-574 (PSSSSENEQTTGSNQQSTIKT) has biased composition (polar residues). Residues serine 555 and serine 556 each carry the phosphoserine modification. Composition is skewed to basic residues over residues 588-614 (RQRH…HHQQ) and 625-644 (SHHH…ARKR). A compositionally biased stretch (polar residues) spans 652–661 (STTAEQQQTI). A compositionally biased stretch (low complexity) spans 824 to 842 (NNNNNNNNNSGSSSSSNSS). Residue serine 854 is modified to Phosphoserine. Residues 872 to 915 (QQQQQQQAQLQLQMQRQRNNSVGSNSPSSSSSSSSSSEHNSPIS) show a composition bias toward low complexity. Positions 926 to 935 (SNSASMPSIG) are enriched in polar residues. Residues 936–963 (STATTAAATAAATATTTTSATTTTTTTT) are compositionally biased toward low complexity. The FYVE-type zinc finger occupies 972-1032 (DGKAPRCMSC…VCRECYVREV (61 aa)). Cysteine 978, cysteine 981, cysteine 994, cysteine 997, cysteine 1002, cysteine 1005, cysteine 1024, and cysteine 1027 together coordinate Zn(2+).

The protein belongs to the lst-2 family.

In terms of biological role, negative regulator of epidermal growth factor receptor (EGFR) signaling. This Drosophila virilis (Fruit fly) protein is Lateral signaling target protein 2 homolog.